A 291-amino-acid polypeptide reads, in one-letter code: 33 kDa chaperonin (291 aa).

Disulfide bonds link Cys236/Cys238 and Cys269/Cys272.

This sequence belongs to the HSP33 family. Under oxidizing conditions two disulfide bonds are formed involving the reactive cysteines. Under reducing conditions zinc is bound to the reactive cysteines and the protein is inactive.

Its subcellular location is the cytoplasm. In terms of biological role, redox regulated molecular chaperone. Protects both thermally unfolding and oxidatively damaged proteins from irreversible aggregation. Plays an important role in the bacterial defense system toward oxidative stress. This chain is 33 kDa chaperonin, found in Lactobacillus johnsonii (strain CNCM I-12250 / La1 / NCC 533).